The sequence spans 156 residues: MSRRHRAEKREINPDPKFGDVVITKFMNAIMFDGKKSVAERIVYGALDVVEGKVKTDPVALFHQALENVAPHIEVRSRRVGGATYQVPVDVRPDRRQALAIRWLIKAARGRNETAMIDRLSGELVDAANNRGTAVKKREDVHRMAEANRAFSHYRW.

This sequence belongs to the universal ribosomal protein uS7 family. As to quaternary structure, part of the 30S ribosomal subunit. Contacts proteins S9 and S11.

One of the primary rRNA binding proteins, it binds directly to 16S rRNA where it nucleates assembly of the head domain of the 30S subunit. Is located at the subunit interface close to the decoding center, probably blocks exit of the E-site tRNA. The polypeptide is Small ribosomal subunit protein uS7A/uS7B (Bartonella bacilliformis (strain ATCC 35685 / KC583 / Herrer 020/F12,63)).